A 228-amino-acid chain; its full sequence is Superoxide dismutase [Mn] (228 aa).

Positions 1–23 (MTRSLKTTLILLASSVISMSALA) are cleaved as a signal peptide. H49, H100, D188, and H192 together coordinate Mn(2+).

This sequence belongs to the iron/manganese superoxide dismutase family. The cofactor is Mn(2+).

The protein localises to the periplasm. It carries out the reaction 2 superoxide + 2 H(+) = H2O2 + O2. In terms of biological role, destroys superoxide anion radicals which are normally produced within the cells and which are toxic to biological systems. The chain is Superoxide dismutase [Mn] (sodA) from Acinetobacter baylyi (strain ATCC 33305 / BD413 / ADP1).